The chain runs to 197 residues: Secreted RxLR effector protein 48 (197 aa).

The signal sequence occupies residues 1-27 (MCCVSWNWVLACTFLLIFLSWWNCCND). A RxLR-dEER motif is present at residues 58–79 (RLLRVNLAANAEVLTHEIEEEK).

Belongs to the RxLR effector family.

It is found in the secreted. It localises to the host nucleus. The protein resides in the host cytoplasm. Functionally, secreted effector that completely suppresses the host cell death induced by cell death-inducing proteins. The polypeptide is Secreted RxLR effector protein 48 (Plasmopara viticola (Downy mildew of grapevine)).